The primary structure comprises 191 residues: Putative glutathione-dependent formaldehyde-activating enzyme (191 aa).

The 147-residue stretch at 20–166 (FPGGNLYCLC…FQSLGLQTYD (147 aa)) folds into the CENP-V/GFA domain. Residues cysteine 27, cysteine 29, cysteine 48, cysteine 50, cysteine 53, cysteine 95, and cysteine 98 each coordinate Zn(2+).

The protein belongs to the Gfa family. It depends on Zn(2+) as a cofactor.

It catalyses the reaction S-(hydroxymethyl)glutathione = glutathione + formaldehyde. It participates in one-carbon metabolism; formaldehyde degradation; formate from formaldehyde (glutathione route): step 1/3. Its function is as follows. Catalyzes the condensation of formaldehyde and glutathione to S-hydroxymethylglutathione. This Aspergillus flavus (strain ATCC 200026 / FGSC A1120 / IAM 13836 / NRRL 3357 / JCM 12722 / SRRC 167) protein is Putative glutathione-dependent formaldehyde-activating enzyme.